We begin with the raw amino-acid sequence, 259 residues long: Thiazole synthase (259 aa).

Lys99 (schiff-base intermediate with DXP) is an active-site residue. 1-deoxy-D-xylulose 5-phosphate contacts are provided by residues Gly161, 187–188 (AG), and 209–210 (NT).

This sequence belongs to the ThiG family. In terms of assembly, homotetramer. Forms heterodimers with either ThiH or ThiS.

Its subcellular location is the cytoplasm. It carries out the reaction [ThiS sulfur-carrier protein]-C-terminal-Gly-aminoethanethioate + 2-iminoacetate + 1-deoxy-D-xylulose 5-phosphate = [ThiS sulfur-carrier protein]-C-terminal Gly-Gly + 2-[(2R,5Z)-2-carboxy-4-methylthiazol-5(2H)-ylidene]ethyl phosphate + 2 H2O + H(+). Its pathway is cofactor biosynthesis; thiamine diphosphate biosynthesis. In terms of biological role, catalyzes the rearrangement of 1-deoxy-D-xylulose 5-phosphate (DXP) to produce the thiazole phosphate moiety of thiamine. Sulfur is provided by the thiocarboxylate moiety of the carrier protein ThiS. In vitro, sulfur can be provided by H(2)S. This is Thiazole synthase from Nautilia profundicola (strain ATCC BAA-1463 / DSM 18972 / AmH).